Here is an 84-residue protein sequence, read N- to C-terminus: MAHKKGQGSTRNGRDSHSKRLGIKEFSGEVVKAGHILLRQRGTKFKPGKNVGMGRDFTLYSLVHGQVEWDGSRRLVHVKPFNTA.

Residues 1–21 (MAHKKGQGSTRNGRDSHSKRL) form a disordered region. Residues 12-21 (NGRDSHSKRL) show a composition bias toward basic and acidic residues.

The protein belongs to the bacterial ribosomal protein bL27 family.

The polypeptide is Large ribosomal subunit protein bL27 (Methylacidiphilum infernorum (isolate V4) (Methylokorus infernorum (strain V4))).